The primary structure comprises 912 residues: Coatomer subunit beta (912 aa).

HEAT repeat units follow at residues 59–96, 100–135, 136–172, 244–281, 300–337, 339–375, 397–434, 441–479, 550–575, and 576–612; these read PIPQLLMPIILYVMPSNDHTIKKLLLIYWEVIEKTHLG, SEMILVCNSLLNDLNHPNEFVRGSTLRFLCKLREAE, VLEPLVPSVRSNLENRHAYCRRNAVLAIYNIYSHFDY, SERSKYIKCIFTLLNSSSPAVKYESAGTLLSLSSAPTA, NVKMIVLDKLIEIKKNHSKIMEELVMDILRALSSPNID, CKKVLNIVLDSVTPKNIDEIILFLKKEINKTQSKEFD, EVLGNVVPLLMEYLGDSYLPSAVDVVIFLREVVETYPS, KKLIENLSSIKVSKVYRVAVWVIAEYVTCLEDLQYAMTS, LKAQVMMIISVLINLSKASQVSTSKS, and AYERMLSCIQVLIDSNATIKKIWLQDCRDSFANYLKY.

In terms of assembly, oligomeric complex that consists of at least the alpha, beta, beta', gamma, delta, epsilon and zeta subunits.

Its subcellular location is the cytoplasm. The protein resides in the golgi apparatus membrane. The protein localises to the cytoplasmic vesicle. It is found in the COPI-coated vesicle membrane. The coatomer is a cytosolic protein complex that binds to dilysine motifs and reversibly associates with Golgi non-clathrin-coated vesicles, which further mediate biosynthetic protein transport from the ER, via the Golgi up to the trans Golgi network. Coatomer complex is required for budding from Golgi membranes, and is essential for the retrograde Golgi-to-ER transport of dilysine-tagged proteins. The protein is Coatomer subunit beta (copb) of Dictyostelium discoideum (Social amoeba).